The primary structure comprises 308 residues: Putative gluconeogenesis factor (308 aa).

The protein belongs to the gluconeogenesis factor family.

The protein localises to the cytoplasm. Its function is as follows. Required for morphogenesis under gluconeogenic growth conditions. This chain is Putative gluconeogenesis factor, found in Pasteurella multocida (strain Pm70).